The chain runs to 192 residues: Peptidyl-tRNA hydrolase (192 aa).

Tyr17 contacts tRNA. His22 acts as the Proton acceptor in catalysis. TRNA contacts are provided by Phe68, Asn70, and Asn116.

This sequence belongs to the PTH family. In terms of assembly, monomer.

The protein localises to the cytoplasm. It catalyses the reaction an N-acyl-L-alpha-aminoacyl-tRNA + H2O = an N-acyl-L-amino acid + a tRNA + H(+). Functionally, hydrolyzes ribosome-free peptidyl-tRNAs (with 1 or more amino acids incorporated), which drop off the ribosome during protein synthesis, or as a result of ribosome stalling. Catalyzes the release of premature peptidyl moieties from peptidyl-tRNA molecules trapped in stalled 50S ribosomal subunits, and thus maintains levels of free tRNAs and 50S ribosomes. The chain is Peptidyl-tRNA hydrolase from Hydrogenovibrio crunogenus (strain DSM 25203 / XCL-2) (Thiomicrospira crunogena).